The chain runs to 151 residues: Aspartate carbamoyltransferase regulatory chain (151 aa).

4 residues coordinate Zn(2+): C108, C113, C138, and C141.

The protein belongs to the PyrI family. Contains catalytic and regulatory chains. Zn(2+) serves as cofactor.

In terms of biological role, involved in allosteric regulation of aspartate carbamoyltransferase. This chain is Aspartate carbamoyltransferase regulatory chain, found in Pyrobaculum arsenaticum (strain DSM 13514 / JCM 11321 / PZ6).